The primary structure comprises 758 residues: Glucocorticoid receptor (758 aa).

Disordered stretches follow at residues 1-61 and 349-382; these read MDPG…SANG and GMSS…PSGP. The modulating stretch occupies residues 1–386; the sequence is MDPGGLKHSK…AKPSGPTHKI (386 aa). Low complexity predominate over residues 26 to 42; it reads GSFSGDTGGSKSTTSTS. NR C4-type zinc fingers lie at residues 387–407 and 432–456; these read CLVC…CGSC and CAGR…FRKC. A DNA-binding region (nuclear receptor) is located at residues 387–461; that stretch reads CLVCSDEASG…RFRKCLQAGM (75 aa). A hinge region spans residues 462-498; sequence NLEARKNKKLIRLKGQQTTMEPNPPPPDERACALIPK. The region spanning 499–733 is the NR LBD domain; it reads SMPQLVPTML…FPEMLAEIIS (235 aa).

This sequence belongs to the nuclear hormone receptor family. NR3 subfamily. Heteromultimeric cytoplasmic complex with HSP90AA1, HSPA1A/HSPA1B, and FKBP5 or another immunophilin such as PPID, STIP1, or the immunophilin homolog PPP5C. Upon ligand binding FKBP5 dissociates from the complex and FKBP4 takes its place, thereby linking the complex to dynein and mediating transport to the nucleus, where the complex dissociates. Directly interacts with UNC45A. Binds to DNA as a homodimer, and as heterodimer with NR3C2 or the retinoid X receptor. Binds STAT5A and STAT5B homodimers and heterodimers. Interacts with NRIP1, POU2F1, POU2F2 and TRIM28. Interacts with several coactivator complexes, including the SMARCA4 complex, CREBBP/EP300, TADA2L (Ada complex) and p160 coactivators such as NCOA2 and NCOA6. Interaction with BAG1 inhibits transactivation. Interacts with HEXIM1, PELP1 and TGFB1I1. Interacts with NCOA1, NCOA3, SMARCA4, SMARCC1, SMARCD1, and SMARCE1. In terms of processing, phosphorylated in the absence of hormone; becomes hyperphosphorylated in the presence of glucocorticoids. May be dephosphorylated by PPP5C, attenuates NR3C1 action. As to expression, isoform 1 is expressed in all tissues tested including liver, gills, intestine, skeletal muscle, kidney, heart, spleen, stomach, brain, pituitary, ovary, testis, skin and bladder. Isoform 2 is found only in testis.

It is found in the cytoplasm. The protein resides in the nucleus. It localises to the mitochondrion. Its subcellular location is the cytoskeleton. The protein localises to the spindle. It is found in the microtubule organizing center. The protein resides in the centrosome. Functionally, receptor for glucocorticoids (GC). Has a dual mode of action: as a transcription factor that binds to glucocorticoid response elements (GRE), both for nuclear and mitochondrial DNA, and as a modulator of other transcription factors. Affects inflammatory responses, cellular proliferation and differentiation in target tissues. Involved in chromatin remodeling. Plays a role in rapid mRNA degradation by binding to the 5' UTR of target mRNAs and interacting with PNRC2 in a ligand-dependent manner which recruits the RNA helicase UPF1 and the mRNA-decapping enzyme DCP1A, leading to RNA decay. Could act as a coactivator for STAT5-dependent transcription upon growth hormone (GH) stimulation and could reveal an essential role of hepatic GR in the control of body growth. Mediates glucocorticoid-induced apoptosis. Promotes accurate chromosome segregation during mitosis. May act as a tumor suppressor. May play a negative role in adipogenesis through the regulation of lipolytic and antilipogenic gene expression. This chain is Glucocorticoid receptor (nr3c1), found in Oncorhynchus mykiss (Rainbow trout).